Consider the following 391-residue polypeptide: 8-amino-7-oxononanoate synthase (391 aa).

Residue arginine 19 coordinates substrate. A pyridoxal 5'-phosphate-binding site is contributed by 106–107; sequence GY. Residue histidine 131 participates in substrate binding. Pyridoxal 5'-phosphate is bound by residues serine 178, histidine 206, and threonine 234. Lysine 237 carries the N6-(pyridoxal phosphate)lysine modification. A substrate-binding site is contributed by threonine 353.

The protein belongs to the class-II pyridoxal-phosphate-dependent aminotransferase family. BioF subfamily. In terms of assembly, homodimer. The cofactor is pyridoxal 5'-phosphate.

The catalysed reaction is 6-carboxyhexanoyl-[ACP] + L-alanine + H(+) = (8S)-8-amino-7-oxononanoate + holo-[ACP] + CO2. Its pathway is cofactor biosynthesis; biotin biosynthesis. In terms of biological role, catalyzes the decarboxylative condensation of pimeloyl-[acyl-carrier protein] and L-alanine to produce 8-amino-7-oxononanoate (AON), [acyl-carrier protein], and carbon dioxide. The sequence is that of 8-amino-7-oxononanoate synthase from Geobacter metallireducens (strain ATCC 53774 / DSM 7210 / GS-15).